A 172-amino-acid polypeptide reads, in one-letter code: Adenine phosphoribosyltransferase (172 aa).

Belongs to the purine/pyrimidine phosphoribosyltransferase family. In terms of assembly, homodimer.

It localises to the cytoplasm. The enzyme catalyses AMP + diphosphate = 5-phospho-alpha-D-ribose 1-diphosphate + adenine. It participates in purine metabolism; AMP biosynthesis via salvage pathway; AMP from adenine: step 1/1. In terms of biological role, catalyzes a salvage reaction resulting in the formation of AMP, that is energically less costly than de novo synthesis. This Synechocystis sp. (strain ATCC 27184 / PCC 6803 / Kazusa) protein is Adenine phosphoribosyltransferase.